Reading from the N-terminus, the 499-residue chain is Taxadiene 5-alpha hydroxylase (499 aa).

A helical; Signal-anchor transmembrane segment spans residues 22–42 (TESFSIALSAIAGILLLLLLF). Cys-445 is a binding site for heme.

The protein belongs to the cytochrome P450 family. It depends on heme as a cofactor.

It is found in the membrane. The enzyme catalyses taxa-4(5),11(12)-diene + reduced [NADPH--hemoprotein reductase] + O2 = taxa-4(20),11-dien-5alpha-ol + oxidized [NADPH--hemoprotein reductase] + H2O + H(+). Its pathway is alkaloid biosynthesis; taxol biosynthesis; taxa-4(20),11-dien-5alpha-ol from geranylgeranyl diphosphate: step 2/2. Functionally, catalyzes the first oxygenation step of taxol biosynthesis. Can use both taxa-4(5),11(12)-diene and taxa-4(20),11(12)-diene as substrate. The polypeptide is Taxadiene 5-alpha hydroxylase (Taxus cuspidata (Japanese yew)).